We begin with the raw amino-acid sequence, 168 residues long: Photosystem I assembly protein Ycf3 (168 aa).

3 TPR repeats span residues 35–68 (AFTY…EIDP), 72–105 (SYIL…NPFL), and 120–153 (GEQA…TPGN).

This sequence belongs to the Ycf3 family.

It localises to the plastid. The protein localises to the chloroplast thylakoid membrane. Essential for the assembly of the photosystem I (PSI) complex. May act as a chaperone-like factor to guide the assembly of the PSI subunits. This is Photosystem I assembly protein Ycf3 from Atropa belladonna (Belladonna).